Here is a 40-residue protein sequence, read N- to C-terminus: uncharacterized protein (40 aa).

This is an uncharacterized protein from Sulfolobus acidocaldarius (strain ATCC 33909 / DSM 639 / JCM 8929 / NBRC 15157 / NCIMB 11770).